The primary structure comprises 508 residues: Proline--tRNA ligase 2 (508 aa).

This sequence belongs to the class-II aminoacyl-tRNA synthetase family. ProS type 3 subfamily. In terms of assembly, homodimer.

The protein localises to the cytoplasm. It carries out the reaction tRNA(Pro) + L-proline + ATP = L-prolyl-tRNA(Pro) + AMP + diphosphate. Functionally, catalyzes the attachment of proline to tRNA(Pro) in a two-step reaction: proline is first activated by ATP to form Pro-AMP and then transferred to the acceptor end of tRNA(Pro). This is Proline--tRNA ligase 2 from Bacillus anthracis.